We begin with the raw amino-acid sequence, 509 residues long: Erythropoietin receptor (509 aa).

A signal peptide spans 1–24; that stretch reads MYHFGATLWPGVGSLCLLLAGATW. Residues 25–251 are Extracellular-facing; the sequence is APSPNSPDAK…SLLTASDLDP (227 aa). 2 cysteine pairs are disulfide-bonded: Cys52/Cys62 and Cys91/Cys107. The Fibronectin type-III domain maps to 148-248; that stretch reads PPAGLLARRA…EPASLLTASD (101 aa). An N-linked (GlcNAc...) asparagine glycan is attached at Asn184. Positions 234-238 match the WSXWS motif motif; it reads WSAWS. A helical membrane pass occupies residues 252–274; that stretch reads LILTLSLILVLILLLLAVLALLS. Residues 275–509 lie on the Cytoplasmic side of the membrane; it reads HRRTLKQKIW…PSPPNYVTCS (235 aa). Lys282 is covalently cross-linked (Glycyl lysine isopeptide (Lys-Gly) (interchain with G-Cter in ubiquitin)). The Box 1 motif signature appears at 283 to 291; the sequence is IWPGIPSPE. Residues Tyr369 and Tyr427 each carry the phosphotyrosine; by JAK2 modification. Residues 453–458 carry the ITIM motif motif; the sequence is LKYLYL. Residue Lys454 forms a Glycyl lysine isopeptide (Lys-Gly) (interchain with G-Cter in ubiquitin) linkage. A phosphotyrosine; by JAK2 mark is found at Tyr455, Tyr457, Tyr469, Tyr486, Tyr490, and Tyr505. Residues 467–509 are disordered; the sequence is TDYSSGGSQETQGGSSSGPYSNPYENSLVPAPEPSPPNYVTCS. The segment covering 470-493 has biased composition (low complexity); sequence SSGGSQETQGGSSSGPYSNPYENS.

The protein belongs to the type I cytokine receptor family. Type 1 subfamily. Forms homodimers on EPO stimulation. The tyrosine-phosphorylated form interacts with several SH2 domain-containing proteins including LYN, the adapter protein SH2B2, PTPN6, PTPN11, JAK2, PI3 kinases, STAT5A/B, SOCS3, CRKL. Interacts with INPP5D/SHIP1. SH2B2 binding inhibits the JAK-STAT signaling. Interacts with RHEX; this interaction occurs in a erythropoietin (EPO)-dependent manner. Interacts with ATXN2L. Post-translationally, on EPO stimulation, phosphorylated on C-terminal tyrosine residues by JAK2. The phosphotyrosine motifs are also recruitment sites for several SH2-containing proteins and adapter proteins which mediate cell proliferation. Phosphorylation on Tyr-455 is required for PTPN6 interaction, Tyr-427 for PTPN11. Tyr-427 is also required for SOCS3 binding, but Tyr-455/Tyr-457 motif is the preferred binding site. Ubiquitinated by the ECS(SOCS2) complex following ligand-binding and phosphorylation by JAK2, leading to its degradation by the proteasome. Regulation by the ECS(SOCS2) complex acts as a negative feedback loop of erythropoietin-mediated signaling pathway. Ubiquitination at Lys-282 mediates receptor internalization, whereas ubiquitination at Lys-454 promotes trafficking of activated receptors to the lysosomes for degradation. Ubiquitinated by NOSIP; appears to be either multi-monoubiquitinated or polyubiquitinated. Ubiquitination mediates proliferation and survival of EPO-dependent cells.

It localises to the cell membrane. Receptor for erythropoietin, which mediates erythropoietin-induced erythroblast proliferation and differentiation. Upon EPO stimulation, EPOR dimerizes triggering the JAK2/STAT5 signaling cascade. In some cell types, can also activate STAT1 and STAT3. May also activate the LYN tyrosine kinase. Its function is as follows. Isoform EPOR-T acts as a dominant-negative receptor of EPOR-mediated signaling. The polypeptide is Erythropoietin receptor (EPOR) (Sus scrofa (Pig)).